The following is a 579-amino-acid chain: Vitamin B6 transporter TPN1 (579 aa).

Residues 1-98 (MNRDNMDTTK…LHVAGLWLSA (98 aa)) are Cytoplasmic-facing. The helical transmembrane segment at 99-119 (TGGLSSMSSFLLGPLLFGLSF) threads the bilayer. The Extracellular portion of the chain corresponds to 120–122 (RES). Residues 123–143 (VASSLISVTIGCLIAAYCSIM) traverse the membrane as a helical segment. The Cytoplasmic segment spans residues 144–157 (GPQSGCRQMVTARY). A helical transmembrane segment spans residues 158 to 178 (LFGWWFVKLVALASIIGVMGW). The Extracellular portion of the chain corresponds to 179–198 (SVVNSVVGGEMLAAISNDKV). A helical transmembrane segment spans residues 199–219 (PLWVGIVIVTVCSFLVAIFGI). Residues 220-221 (KQ) lie on the Cytoplasmic side of the membrane. A helical transmembrane segment spans residues 222 to 242 (VIKVETYLSVPVLTAFLLLYI). The Extracellular portion of the chain corresponds to 243–274 (SSSDKYSFVNAYVSKGNLDSSTRKGNWMSFFS). The chain crosses the membrane as a helical span at residues 275–295 (LCYSITATWGSITADYYILFP). Residues 296–302 (EDTPYIQ) lie on the Cytoplasmic side of the membrane. The helical transmembrane segment at 303 to 323 (IFCLTFFGTFLPTCFVGILGL) threads the bilayer. The Extracellular portion of the chain corresponds to 324–362 (LLASVAMSYKPWSVEYDSHGMGGLLWAGFQRWNGFGKFC). Residues 363 to 383 (VVVLVFSLVSNNIINTYSAAF) form a helical membrane-spanning segment. At 384–394 (SIQLSSVFCAK) the chain is on the cytoplasmic side. Residues 395–415 (IPRWFWSIVCTIICLVCALIG) traverse the membrane as a helical segment. Residues 416 to 421 (RNHFST) lie on the Extracellular side of the membrane. The helical transmembrane segment at 422–442 (ILGNFLPMIGYWISMYFILLF) threads the bilayer. Residues 443–519 (EENLVFRRFF…EVLTHGYAAT (77 aa)) are Cytoplasmic-facing. The chain crosses the membrane as a helical span at residues 520–540 (FAFIVGVAGVVVGMAQAYWIG). The Extracellular segment spans residues 541–545 (PIAAK). A helical transmembrane segment spans residues 546-566 (FGEYGGDVAMWLSMAFSGVVY). The Cytoplasmic segment spans residues 567–579 (PPCRYLELRKFGR).

Belongs to the purine-cytosine permease (2.A.39) family.

The protein resides in the membrane. In terms of biological role, thiamine-regulated, high affinity import carrier of pyridoxine, pyridoxal and pyridoxamine. The chain is Vitamin B6 transporter TPN1 (TPN1) from Saccharomyces cerevisiae (strain ATCC 204508 / S288c) (Baker's yeast).